Reading from the N-terminus, the 874-residue chain is Alanine--tRNA ligase (874 aa).

Positions 563, 567, 665, and 669 each coordinate Zn(2+).

It belongs to the class-II aminoacyl-tRNA synthetase family. It depends on Zn(2+) as a cofactor.

It is found in the cytoplasm. The catalysed reaction is tRNA(Ala) + L-alanine + ATP = L-alanyl-tRNA(Ala) + AMP + diphosphate. In terms of biological role, catalyzes the attachment of alanine to tRNA(Ala) in a two-step reaction: alanine is first activated by ATP to form Ala-AMP and then transferred to the acceptor end of tRNA(Ala). Also edits incorrectly charged Ser-tRNA(Ala) and Gly-tRNA(Ala) via its editing domain. This Actinobacillus pleuropneumoniae serotype 5b (strain L20) protein is Alanine--tRNA ligase.